We begin with the raw amino-acid sequence, 440 residues long: Serine/threonine-protein kinase STK11 (440 aa).

The 261-residue stretch at 49–309 (YLMGDLLGEG…IQQIRQHNWF (261 aa)) folds into the Protein kinase domain. Residues 55-63 (LGEGSYGKV) and Lys-78 contribute to the ATP site. Asp-176 functions as the Proton acceptor in the catalytic mechanism. 2 positions are modified to phosphothreonine; by autocatalysis: Thr-336 and Thr-365. The segment at 370–440 (VPGQVPEEEA…IRKLSTCKQQ (71 aa)) is disordered. The segment covering 430-440 (KIRKLSTCKQQ) has biased composition (basic residues). Ser-435 is subject to Phosphoserine; by PKA.

This sequence belongs to the protein kinase superfamily. CAMK Ser/Thr protein kinase family. LKB1 subfamily. Catalytic component of a trimeric complex composed of STK11/LKB1, STRAD (STRADA or STRADB) and CAB39/MO25 (CAB39/MO25alpha or CAB39L/MO25beta). Mg(2+) serves as cofactor. Mn(2+) is required as a cofactor. Ubiquitously expressed in all tissues tested. High levels were observed in duodenum and skeletal muscle, lower levels in liver and pancreas.

Its subcellular location is the nucleus. The protein resides in the cytoplasm. It catalyses the reaction L-seryl-[protein] + ATP = O-phospho-L-seryl-[protein] + ADP + H(+). It carries out the reaction L-threonyl-[protein] + ATP = O-phospho-L-threonyl-[protein] + ADP + H(+). Functionally, tumor suppressor serine/threonine-protein kinase that controls the activity of AMP-activated protein kinase (AMPK) family members, thereby playing a role in various processes such as cell metabolism, cell polarity, apoptosis and DNA damage response. Acts by phosphorylating the T-loop of AMPK family proteins, leading to promote their activity. This Gallus gallus (Chicken) protein is Serine/threonine-protein kinase STK11.